A 291-amino-acid chain; its full sequence is Nucleotide-binding protein Cthe_0113 (291 aa).

G8–S15 is a binding site for ATP. Position 59-62 (D59–G62) interacts with GTP.

The protein belongs to the RapZ-like family.

Functionally, displays ATPase and GTPase activities. This chain is Nucleotide-binding protein Cthe_0113, found in Acetivibrio thermocellus (strain ATCC 27405 / DSM 1237 / JCM 9322 / NBRC 103400 / NCIMB 10682 / NRRL B-4536 / VPI 7372) (Clostridium thermocellum).